The chain runs to 91 residues: Potassium channel toxin MeuTXK-beta-2 (91 aa).

An N-terminal signal peptide occupies residues 1–19; that stretch reads MQRNLVVLLFLGMVALSSC. Residues 54–91 form the BetaSPN-type CS-alpha/beta domain; that stretch reads QFGCSAYQGYCDDHCQDIEKKEGFCHGFKCKCGIPMGF. Cystine bridges form between cysteine 57–cysteine 78, cysteine 64–cysteine 83, and cysteine 68–cysteine 85.

The protein belongs to the long chain scorpion toxin family. Class 1 subfamily. Expressed by the venom gland.

The protein localises to the secreted. Its function is as follows. Has a low affinity binding to potassium channels of rat brain synaptosomes. Displays weak antibacterial activity against Stenotrophomonas sp. Strongly inhibits the development of the Plasmodium berghei ookinetes. Displays slight hemolytic effect on mouse erythrocytes. Induces cytolysis on Xenopus oocytes at high concentrations. Is not toxic towards mice and towards the insect Tenebrio molitor. This Mesobuthus eupeus (Lesser Asian scorpion) protein is Potassium channel toxin MeuTXK-beta-2.